A 637-amino-acid polypeptide reads, in one-letter code: Threonine--tRNA ligase (637 aa).

The TGS domain maps to 1 to 61; it reads MPVITLPDGS…DKDAELAIVT (61 aa). Positions 242-533 are catalytic; the sequence is DHRKIGKKLG…LIEHYEGAFP (292 aa). C333, H384, and H510 together coordinate Zn(2+).

The protein belongs to the class-II aminoacyl-tRNA synthetase family. In terms of assembly, homodimer. Zn(2+) serves as cofactor.

Its subcellular location is the cytoplasm. The catalysed reaction is tRNA(Thr) + L-threonine + ATP = L-threonyl-tRNA(Thr) + AMP + diphosphate + H(+). In terms of biological role, catalyzes the attachment of threonine to tRNA(Thr) in a two-step reaction: L-threonine is first activated by ATP to form Thr-AMP and then transferred to the acceptor end of tRNA(Thr). Also edits incorrectly charged L-seryl-tRNA(Thr). The polypeptide is Threonine--tRNA ligase (Hahella chejuensis (strain KCTC 2396)).